Consider the following 274-residue polypeptide: Thiamine kinase (274 aa).

Belongs to the thiamine kinase family.

It carries out the reaction thiamine + ATP = thiamine phosphate + ADP + H(+). It functions in the pathway cofactor biosynthesis; thiamine diphosphate biosynthesis; thiamine phosphate from thiamine: step 1/1. Functionally, catalyzes the ATP-dependent phosphorylation of thiamine to thiamine phosphate. Is involved in thiamine salvage. The polypeptide is Thiamine kinase (Salmonella typhi).